Reading from the N-terminus, the 249-residue chain is Hydantoin racemase (249 aa).

This sequence belongs to the HyuE racemase family. As to quaternary structure, homohexamer.

The enzyme catalyses a D-5-monosubstituted hydantoin = a L-5-monosubstituted hydantoin. The catalysed reaction is D-5-[2-(methylsulfanyl)ethyl]hydantoin = L-5-[2-(methysulfanyl)ethyl]hydantoin. It catalyses the reaction D-5-benzylhydantoin = L-5-benzylhydantoin. It carries out the reaction D-5-isopropylhydantoin = L-5-isopropylhydantoin. The enzyme catalyses D-5-isobutylhydantoin = L-5-isobutylhydantoin. With respect to regulation, strongly inhibited by Cu(2+) and Zn(2+). Slightly stimulated by the addition of Mn(2+) or Co(2+), but also by metal-chelating agents such as EDTA or EGTA, indicating that the enzyme is not a metalloenzyme. Involved in the asymmetric conversion of racemic 5-substituted hydantoins to the corresponding L-amino acids. Catalyzes the racemization via enolization of D- and L-5-monosubstituted hydantoins. Is able to racemize 5-substituted hydantoins having aromatic or aliphatic substituents such as 5-(2-methylthioethyl)hydantoin, 5-isopropylhydantoin, 5-isobutylhydantoin and 5-benzylhydantoin. This chain is Hydantoin racemase, found in Pseudomonas sp. (strain NS671).